We begin with the raw amino-acid sequence, 289 residues long: Heterokaryon incompatibility protein s (289 aa).

A globular domain region spans residues 1–227 (MSEPFGIVAG…KIDAIVGRNS (227 aa)). The segment at 218-289 (KIDAIVGRNS…EYGGKGFWDN (72 aa)) is prion domain (PrD).

Homodimer. Forms heterodimers with het-S.

Its subcellular location is the cytoplasm. Responsible for heterokaryon incompatibility, a process that ensures that during spontaneous, vegetative cell fusion only compatible cells from the same colony survive (non-self-recognition). Forms a prion for the non-Mendelian trait [het-s]. Interacts with het-S from incompatible cells to trigger a lethal reaction that prevents the formation of viable heterokaryons. It is unknown if the native, soluble protein has a cellular function. In Podospora anserina (Pleurage anserina), this protein is Heterokaryon incompatibility protein s (het-s).